Reading from the N-terminus, the 103-residue chain is Carboxysome shell protein CcmK3 (103 aa).

Residues 4–91 (AVGVIQTLGF…PPENVLAVLP (88 aa)) form the BMC domain.

This sequence belongs to the bacterial microcompartments protein family. CcmK subfamily. In terms of assembly, forms mixed heterohexamers with CcmK4, probably with 1:5 CcmK3:CcmK4 stoichiometry. Only very weak interactions with CcmK1 and CcmK2 were seen. Bulky residues in the pore region probably preclude the formation of homohexamers by this subunit.

The protein localises to the carboxysome. A probably minor shell protein component of the carboxysome, a polyhedral inclusion where RuBisCO (ribulose bisphosphate carboxylase, rbcL-rbcS) is sequestered. This subunit probably does not form homohexamers. The sequence is that of Carboxysome shell protein CcmK3 from Synechocystis sp. (strain ATCC 27184 / PCC 6803 / Kazusa).